The following is a 351-amino-acid chain: Inner kinetochore subunit fta2 (351 aa).

The segment at 1–71 (MSGRRYSQIS…SSNGRVDTDR (71 aa)) is disordered. Low complexity predominate over residues 7–18 (SQISQQEGSSSS). The segment covering 54 to 66 (NENSGQSKSSNGR) has biased composition (polar residues).

Belongs to the CENP-P/CTF19 family. As to quaternary structure, component of the heterotetrameric kinetochore subcomplex COMA, which consists of fta2, fta7, mal2 and mis17. The COMA subcomplex is part of a larger constitutive centromere-associated network (CCAN) (also known as central kinetochore Sim4 complex in fission yeast), which is composed of at least cnl2, cnp3, cnp20, fta1, fta2, fta3, fta4, fta6, fta7, mal2, mhf1, mhf2, mis6, mis15, mis17, sim4 and wip1.

Its subcellular location is the nucleus. The protein resides in the chromosome. The protein localises to the centromere. It localises to the kinetochore. Functionally, component of the kinetochore, a multiprotein complex that assembles on centromeric DNA and attaches chromosomes to spindle microtubules, mediating chromosome segregation and sister chromatid segregation during meiosis and mitosis. Component of the inner kinetochore COMA complex, which connects centromere-associated proteins and the outer kinetochore. COMA interacts with other inner kinetochore proteins to form the inner kinetochore constitutive centromere-associated network (CCAN), which serves as a structural platform for outer kinetochore assembly. Fta2, fta3 and fta4 associate with the central core (cnt) and inner repeat (inr) region of the centromere. This Schizosaccharomyces pombe (strain 972 / ATCC 24843) (Fission yeast) protein is Inner kinetochore subunit fta2 (fta2).